The sequence spans 140 residues: MTLNNVARPDLCVSYKKIAPPKGLYSATPSISGVVNQSMPMAAIFLRNKFIAWFSLIQSVHYYLNTDEDIIVAYKENKAPSPMDQPPAIKLFMSLIGLCVCYMNLVFPQQIAQPSSSGSKGNTETTIETTTEVETETAKQ.

Asparagine 36 is a glycosylation site (N-linked (GlcNAc...) asparagine). Residues leucine 91–phenylalanine 107 traverse the membrane as a helical segment. Over residues glutamine 113 to asparagine 122 the composition is skewed to polar residues. The interval glutamine 113–glutamine 140 is disordered. Positions threonine 131–glutamine 140 are enriched in acidic residues.

It is found in the endoplasmic reticulum membrane. This is an uncharacterized protein from Saccharomyces cerevisiae (strain ATCC 204508 / S288c) (Baker's yeast).